The following is a 178-amino-acid chain: Disulfide bond formation protein B (178 aa).

Residues 1–16 (MTIFSSLNQFSKGHVS) are Cytoplasmic-facing. Residues 17-33 (WLLLLLFIIFFEACALY) traverse the membrane as a helical segment. The Periplasmic segment spans residues 34-51 (FQHVMMLAPCVMCIYERV). A disulfide bridge connects residues C43 and C46. Residues 52-67 (AMMGIGGAAIIGLIAP) form a helical membrane-spanning segment. Residues 68–74 (NNALFRW) are Cytoplasmic-facing. A helical transmembrane segment spans residues 75-92 (LGLIGWGLSSYKGLMLAM). Over 93–147 (QHVDYQFNPSPFATCDLFVTFPSWAPLNQWVPWMFEAYGDCSKIVWQFFDLSMPQ) the chain is Periplasmic. An intrachain disulfide couples C107 to C133. The helical transmembrane segment at 148–166 (WLVVIFAGNLVALALIVIA) threads the bilayer. Topologically, residues 167–178 (QFFPVKRKNPIR) are cytoplasmic.

This sequence belongs to the DsbB family.

It localises to the cell inner membrane. Required for disulfide bond formation in some periplasmic proteins. Acts by oxidizing the DsbA protein. The sequence is that of Disulfide bond formation protein B from Vibrio parahaemolyticus serotype O3:K6 (strain RIMD 2210633).